A 222-amino-acid chain; its full sequence is Probable transaldolase (222 aa).

Lysine 83 serves as the catalytic Schiff-base intermediate with substrate.

It belongs to the transaldolase family. Type 3B subfamily.

Its subcellular location is the cytoplasm. The catalysed reaction is D-sedoheptulose 7-phosphate + D-glyceraldehyde 3-phosphate = D-erythrose 4-phosphate + beta-D-fructose 6-phosphate. The protein operates within carbohydrate degradation; pentose phosphate pathway; D-glyceraldehyde 3-phosphate and beta-D-fructose 6-phosphate from D-ribose 5-phosphate and D-xylulose 5-phosphate (non-oxidative stage): step 2/3. In terms of biological role, transaldolase is important for the balance of metabolites in the pentose-phosphate pathway. The protein is Probable transaldolase of Nitrosopumilus maritimus (strain SCM1).